The sequence spans 174 residues: MYAEYVNQLKNFRIRETQGYNSWCAGYTMSALLNATYNTNRYNAESVMRYLHPNLRGHDFQFTGLTSNEMLRFGRSQGRNTQYLNRMTSYNEVDQLTTNNQGIAVLGKRVESSDGIHAGHAMAVAGNAKVNNGQKVILIWNPWDNGLMTQDAHSNIIPVSNGDHYEWYASIYGY.

Catalysis depends on residues cysteine 24, histidine 120, and asparagine 141.

The protein belongs to the peptidase C47 family. Post-translationally, proteolytically cleaved.

The protein localises to the secreted. It is found in the cell wall. With respect to regulation, inhibited by heavy metal ions such as Zn(2+) or Ni(2+), iodoacetamide, N-ethylmaleimide, leupeptin, SDS and E-64. Also inhibited by chloromethylketones TPCK and TLCK and by human plasma inhibitor alpha-2-macroglobulin. Stimulated by L-cysteine. Its function is as follows. Cysteine protease able to cleave elastin, insulin, myoglobin, fibronectin, fibrinogen, HMW-kininogen, alpha-1-protease inhibitor and alpha-1-antitrypsin. Along with other extracellular proteases may contribute to the colonization and infection of human tissues. This chain is Extracellular cysteine protease (ecpA), found in Staphylococcus epidermidis.